The primary structure comprises 229 residues: Cytochrome c oxidase subunit 2 (229 aa).

Topologically, residues 1–26 (MSTWANLGLQDSASPLMEQLIFFHDH) are mitochondrial intermembrane. A helical transmembrane segment spans residues 27–48 (ALLILVMITVLVGYLMVMLFFN). Over 49–62 (SYVNRFLLHGQLIE) the chain is Mitochondrial matrix. The helical transmembrane segment at 63–82 (MIWTILPAIILLFIAMPSLR) threads the bilayer. The Mitochondrial intermembrane portion of the chain corresponds to 83 to 229 (LLYLLDEINE…IKWISDKVNS (147 aa)). Cu cation is bound by residues H161, C196, E198, C200, H204, and M207. A Mg(2+)-binding site is contributed by E198.

The protein belongs to the cytochrome c oxidase subunit 2 family. In terms of assembly, component of the cytochrome c oxidase (complex IV, CIV), a multisubunit enzyme composed of a catalytic core of 3 subunits and several supernumerary subunits. The complex exists as a monomer or a dimer and forms supercomplexes (SCs) in the inner mitochondrial membrane with ubiquinol-cytochrome c oxidoreductase (cytochrome b-c1 complex, complex III, CIII). Cu cation is required as a cofactor.

Its subcellular location is the mitochondrion inner membrane. The enzyme catalyses 4 Fe(II)-[cytochrome c] + O2 + 8 H(+)(in) = 4 Fe(III)-[cytochrome c] + 2 H2O + 4 H(+)(out). In terms of biological role, component of the cytochrome c oxidase, the last enzyme in the mitochondrial electron transport chain which drives oxidative phosphorylation. The respiratory chain contains 3 multisubunit complexes succinate dehydrogenase (complex II, CII), ubiquinol-cytochrome c oxidoreductase (cytochrome b-c1 complex, complex III, CIII) and cytochrome c oxidase (complex IV, CIV), that cooperate to transfer electrons derived from NADH and succinate to molecular oxygen, creating an electrochemical gradient over the inner membrane that drives transmembrane transport and the ATP synthase. Cytochrome c oxidase is the component of the respiratory chain that catalyzes the reduction of oxygen to water. Electrons originating from reduced cytochrome c in the intermembrane space (IMS) are transferred via the dinuclear copper A center (CU(A)) of subunit 2 and heme A of subunit 1 to the active site in subunit 1, a binuclear center (BNC) formed by heme A3 and copper B (CU(B)). The BNC reduces molecular oxygen to 2 water molecules using 4 electrons from cytochrome c in the IMS and 4 protons from the mitochondrial matrix. This Drosophila subobscura (Fruit fly) protein is Cytochrome c oxidase subunit 2 (mt:CoII).